The chain runs to 401 residues: Large ribosomal subunit protein uL3 (401 aa).

Positions 1 to 21 (MSHRKFSAPRHGHMGFTPKKR) are disordered.

Belongs to the universal ribosomal protein uL3 family.

It is found in the cytoplasm. The L3 protein is a component of the large subunit of cytoplasmic ribosomes. The polypeptide is Large ribosomal subunit protein uL3 (rpl-3) (Caenorhabditis briggsae).